A 95-amino-acid polypeptide reads, in one-letter code: Small ribosomal subunit protein uS19 (95 aa).

Belongs to the universal ribosomal protein uS19 family.

Protein S19 forms a complex with S13 that binds strongly to the 16S ribosomal RNA. The protein is Small ribosomal subunit protein uS19 of Chloroflexus aurantiacus (strain ATCC 29366 / DSM 635 / J-10-fl).